Consider the following 193-residue polypeptide: dCTP deaminase, dUMP-forming (193 aa).

DCTP contacts are provided by residues 107-112, D125, 133-135, Q154, and Y168; these read RSSLGR and TLE. Residue E135 is the Proton donor/acceptor of the active site. The disordered stretch occupies residues 169 to 193; that stretch reads AESSGKYHGDERPSPSKMHLDFCRG. Positions 173 to 193 are enriched in basic and acidic residues; the sequence is GKYHGDERPSPSKMHLDFCRG.

This sequence belongs to the dCTP deaminase family. As to quaternary structure, homotrimer.

It catalyses the reaction dCTP + 2 H2O = dUMP + NH4(+) + diphosphate. The protein operates within pyrimidine metabolism; dUMP biosynthesis; dUMP from dCTP: step 1/1. Functionally, bifunctional enzyme that catalyzes both the deamination of dCTP to dUTP and the hydrolysis of dUTP to dUMP without releasing the toxic dUTP intermediate. In Methanopyrus kandleri (strain AV19 / DSM 6324 / JCM 9639 / NBRC 100938), this protein is dCTP deaminase, dUMP-forming.